Here is a 555-residue protein sequence, read N- to C-terminus: Hydrogenase-4 component G (555 aa).

This sequence belongs to the complex I 49 kDa subunit family. The cofactor is [4Fe-4S] cluster.

In terms of biological role, possible component of hydrogenase 4. The sequence is that of Hydrogenase-4 component G from Escherichia coli (strain K12).